Consider the following 314-residue polypeptide: Deoxymugineic acid synthase 1-A (314 aa).

Residues 1-21 (MGAGDKTAAGMPRIGMGTAVQ) form a disordered region. Asp44 lines the NADP(+) pocket. The Proton donor role is filled by Tyr49. His112 is a binding site for substrate. NADP(+) is bound by residues 158-159 (AN), Gln180, 258-266 (FDEARMREN), and 273-281 (ELTEEEHRR).

This sequence belongs to the aldo/keto reductase family. As to expression, mostly expressed in root tissues, observed in mesocotyl and embryonic roots, seedling roots, crown and seedling leafes, mature bracts, anthers, pistil, caryopsis and embryos.

The catalysed reaction is 2'-deoxymugineate + NAD(+) = 3''-deamino-3''-oxonicotianamine + NADH + H(+). It carries out the reaction 2'-deoxymugineate + NADP(+) = 3''-deamino-3''-oxonicotianamine + NADPH + H(+). The protein operates within siderophore biosynthesis. Functionally, catalyzes the reduction of a 3''-keto intermediate during the biosynthesis of 2'-deoxymugineic acid (DMA) from L-Met. Involved in the formation of phytosiderophores (MAs) belonging to the mugineic acid family and required to acquire iron. The polypeptide is Deoxymugineic acid synthase 1-A (Triticum aestivum (Wheat)).